A 379-amino-acid chain; its full sequence is MTNIRKTHPPIKIINHSFIDLPAPSNISAWWTFGSLLGLCLLIQILTGLFLAMHYTSDTMTAFSSVTHICRDVNYGWLIRYMHANGASMFFICLFLHVGRGLYYGSYTYLETWNIGVILLFAVMATAFMGYVLPWGQMSFWGATVITNLMSAIPYIGTTLVEWIWGGFSVDKATLTRFFAFHFILPFIVAALVMVHLLFLPETGSNNPSCLISDSDKIPFHPYYTIKDVLGVLLLLLLFMMLVLFSPDLLGDPDNYTPANPLNTPPHIKPEWYFLFAYAILRSIPNKLGGVLALVFSILILMLFPILHMSKQRSMMFRPLSQCLFWILVADLFTLTWIGGQPVEYPFITIGQVASILYFTIILLALPSISMLENKLLKW.

A run of 8 helical transmembrane segments spans residues 33-53 (FGSL…FLAM), 77-98 (WLIR…FLHV), 113-133 (WNIG…GYVL), 178-198 (FFAF…VHLL), 226-246 (IKDV…VLFS), 288-308 (LGGV…PILH), 320-340 (LSQC…WIGG), and 347-367 (FITI…LALP). 2 residues coordinate heme b: His-83 and His-97. Heme b-binding residues include His-182 and His-196.

Belongs to the cytochrome b family. As to quaternary structure, the cytochrome bc1 complex contains 11 subunits: 3 respiratory subunits (MT-CYB, CYC1 and UQCRFS1), 2 core proteins (UQCRC1 and UQCRC2) and 6 low-molecular weight proteins (UQCRH/QCR6, UQCRB/QCR7, UQCRQ/QCR8, UQCR10/QCR9, UQCR11/QCR10 and a cleavage product of UQCRFS1). This cytochrome bc1 complex then forms a dimer. Heme b serves as cofactor.

Its subcellular location is the mitochondrion inner membrane. Its function is as follows. Component of the ubiquinol-cytochrome c reductase complex (complex III or cytochrome b-c1 complex) that is part of the mitochondrial respiratory chain. The b-c1 complex mediates electron transfer from ubiquinol to cytochrome c. Contributes to the generation of a proton gradient across the mitochondrial membrane that is then used for ATP synthesis. This Sciurus niger (Eastern fox squirrel) protein is Cytochrome b (MT-CYB).